Reading from the N-terminus, the 535-residue chain is Succinate-semialdehyde dehydrogenase, mitochondrial (535 aa).

A mitochondrion-targeting transit peptide spans 1–47; that stretch reads MATCIWLRSCGARRLGWTFPGCRLRPRAGGLVPASGPAPGPAQLRCY. Residue Lys126 is modified to N6-acetyllysine; alternate. At Lys126 the chain carries N6-succinyllysine; alternate. Lys135 and Lys184 each carry N6-succinyllysine. NAD(+) contacts are provided by residues Arg213 and 228-231; that span reads KPAE. Arg213 provides a ligand contact to substrate. Lys265 bears the N6-acetyllysine; alternate mark. Lys265 is modified (N6-succinyllysine; alternate). An NAD(+)-binding site is contributed by 284–289; that stretch reads GSTTTG. Glu306 serves as the catalytic Proton acceptor. Arg334 is a binding site for substrate. The active-site Nucleophile is the Cys340. Cys340 and Cys342 are joined by a disulfide. Position 365 is an N6-acetyllysine (Lys365). Lys402 is modified (N6-succinyllysine). Lys411 carries the N6-acetyllysine modification. Ser498 serves as a coordination point for substrate. Residue Ser499 is modified to Phosphoserine.

Belongs to the aldehyde dehydrogenase family. In terms of assembly, homotetramer.

Its subcellular location is the mitochondrion. It catalyses the reaction succinate semialdehyde + NAD(+) + H2O = succinate + NADH + 2 H(+). It participates in amino-acid degradation; 4-aminobutanoate degradation. Its activity is regulated as follows. Redox-regulated. Inhibited under oxydizing conditions. Functionally, catalyzes one step in the degradation of the inhibitory neurotransmitter gamma-aminobutyric acid (GABA). This chain is Succinate-semialdehyde dehydrogenase, mitochondrial (ALDH5A1), found in Pan paniscus (Pygmy chimpanzee).